We begin with the raw amino-acid sequence, 379 residues long: ATP phosphoribosyltransferase regulatory subunit (379 aa).

It belongs to the class-II aminoacyl-tRNA synthetase family. HisZ subfamily. Heteromultimer composed of HisG and HisZ subunits.

The protein localises to the cytoplasm. It functions in the pathway amino-acid biosynthesis; L-histidine biosynthesis; L-histidine from 5-phospho-alpha-D-ribose 1-diphosphate: step 1/9. Its function is as follows. Required for the first step of histidine biosynthesis. May allow the feedback regulation of ATP phosphoribosyltransferase activity by histidine. The chain is ATP phosphoribosyltransferase regulatory subunit from Sinorhizobium fredii (strain NBRC 101917 / NGR234).